Reading from the N-terminus, the 455-residue chain is N-lysine methyltransferase setd6 (455 aa).

Residues 38–266 (PKVYISTEGT…AGQELFNTYG (229 aa)) form the SET domain.

It belongs to the class V-like SAM-binding methyltransferase superfamily. Histone-lysine methyltransferase family. SETD6 subfamily.

The protein resides in the nucleus. Functionally, protein-lysine N-methyltransferase. In Xenopus laevis (African clawed frog), this protein is N-lysine methyltransferase setd6 (setd6).